Here is a 104-residue protein sequence, read N- to C-terminus: Large ribosomal subunit protein uL24 (104 aa).

Belongs to the universal ribosomal protein uL24 family. Part of the 50S ribosomal subunit.

Functionally, one of two assembly initiator proteins, it binds directly to the 5'-end of the 23S rRNA, where it nucleates assembly of the 50S subunit. In terms of biological role, one of the proteins that surrounds the polypeptide exit tunnel on the outside of the subunit. This is Large ribosomal subunit protein uL24 from Halothermothrix orenii (strain H 168 / OCM 544 / DSM 9562).